A 341-amino-acid polypeptide reads, in one-letter code: tRNA N6-adenosine threonylcarbamoyltransferase (341 aa).

Residues His-116 and His-120 each contribute to the Fe cation site. Substrate contacts are provided by residues 139-143 (LVSGG), Asp-172, Gly-185, and Asn-274. Asp-302 is a Fe cation binding site.

Belongs to the KAE1 / TsaD family. Requires Fe(2+) as cofactor.

It is found in the cytoplasm. The enzyme catalyses L-threonylcarbamoyladenylate + adenosine(37) in tRNA = N(6)-L-threonylcarbamoyladenosine(37) in tRNA + AMP + H(+). Its function is as follows. Required for the formation of a threonylcarbamoyl group on adenosine at position 37 (t(6)A37) in tRNAs that read codons beginning with adenine. Is involved in the transfer of the threonylcarbamoyl moiety of threonylcarbamoyl-AMP (TC-AMP) to the N6 group of A37, together with TsaE and TsaB. TsaD likely plays a direct catalytic role in this reaction. This chain is tRNA N6-adenosine threonylcarbamoyltransferase, found in Vesicomyosocius okutanii subsp. Calyptogena okutanii (strain HA).